Here is a 222-residue protein sequence, read N- to C-terminus: Phosphoglycolate phosphatase (222 aa).

Asp-8 functions as the Nucleophile in the catalytic mechanism. Mg(2+)-binding residues include Asp-8 and Asp-10. Residue Lys-146 participates in substrate binding. Mg(2+)-binding residues include Asp-169 and Asp-173.

This sequence belongs to the archaeal SPP-like hydrolase family. Mg(2+) serves as cofactor.

It catalyses the reaction 2-phosphoglycolate + H2O = glycolate + phosphate. Catalyzes the dephosphorylation of 2-phosphoglycolate. The sequence is that of Phosphoglycolate phosphatase from Methanothrix thermoacetophila (strain DSM 6194 / JCM 14653 / NBRC 101360 / PT) (Methanosaeta thermophila).